Reading from the N-terminus, the 74-residue chain is Tetrahydromethanopterin S-methyltransferase subunit G (74 aa).

Residues 50 to 70 form a helical membrane-spanning segment; the sequence is IGILYGLVIGLYLCMLYILLG.

It belongs to the MtrG family. The complex is composed of 8 subunits; MtrA, MtrB, MtrC, MtrD, MtrE, MtrF, MtrG and MtrH.

The protein resides in the cell membrane. The catalysed reaction is 5-methyl-5,6,7,8-tetrahydromethanopterin + coenzyme M + 2 Na(+)(in) = 5,6,7,8-tetrahydromethanopterin + methyl-coenzyme M + 2 Na(+)(out). It participates in one-carbon metabolism; methanogenesis from CO(2); methyl-coenzyme M from 5,10-methylene-5,6,7,8-tetrahydromethanopterin: step 2/2. In terms of biological role, part of a complex that catalyzes the formation of methyl-coenzyme M and tetrahydromethanopterin from coenzyme M and methyl-tetrahydromethanopterin. This is an energy-conserving, sodium-ion translocating step. The polypeptide is Tetrahydromethanopterin S-methyltransferase subunit G (Methanopyrus kandleri (strain AV19 / DSM 6324 / JCM 9639 / NBRC 100938)).